Reading from the N-terminus, the 174-residue chain is Cuticle protein 1 (174 aa).

The first 18 residues, 1–18, serve as a signal peptide directing secretion; the sequence is MRFLIAFVAILGYASASA.

The protein localises to the secreted. The chain is Cuticle protein 1 from Lonomia obliqua (Moth).